Here is a 575-residue protein sequence, read N- to C-terminus: Arginine--tRNA ligase (575 aa).

The short motif at 136–146 is the 'HIGH' region element; it reads ANPTGPLHVGH.

It belongs to the class-I aminoacyl-tRNA synthetase family. As to quaternary structure, monomer.

It localises to the cytoplasm. The enzyme catalyses tRNA(Arg) + L-arginine + ATP = L-arginyl-tRNA(Arg) + AMP + diphosphate. In Polynucleobacter necessarius subsp. necessarius (strain STIR1), this protein is Arginine--tRNA ligase.